The primary structure comprises 5058 residues: ATP-binding cassette sub-family A member 13 (5058 aa).

7 helical membrane passes run 23 to 43, 3568 to 3588, 3607 to 3627, 3648 to 3668, 3679 to 3699, 3709 to 3729, and 3752 to 3772; these read PVLFLAEFFWPCILFVILTVL, VGFFFPLIMMLTWMVSVASMV, GVHPVIHFLAWFLENMAVLTI, FIVFLFLLDFGMSVVMLSYLL, ALCTSLVYMISFLPYIVLLVL, TFLCLLSTTAFGQGVFFITFL, and FGWVCWMILFDSSLYFLCGWY. One can recognise an ABC transporter 1 domain in the interval 3842-4074; sequence VTLVSVTKEY…YGQGLRLTLT (233 aa). 3875-3882 is a binding site for ATP; sequence GTNGAGKT. 7 consecutive transmembrane segments (helical) span residues 4226-4246, 4458-4478, 4504-4524, 4536-4556, 4568-4588, 4607-4627, and 4651-4671; these read TLADLLLPVLFVALAMGLFMV, VALCIVLGFSILSASIGSSVV, FLYDMLFYLVSVCLCVAVIVA, LAATALLLSLFGYATLPWMYL, FISYVSLNFIFGLCTMLITIM, VLKWVFTIFPQFCLGQGLVEL, and MNFLGWIFVQLASQGTVLLLL. The 239-residue stretch at 4718–4956 folds into the ABC transporter 2 domain; that stretch reads LVLYNLSKHY…FGDGYTVKVW (239 aa). 4754-4761 is a binding site for ATP; it reads GVNGAGKS.

It belongs to the ABC transporter superfamily. In terms of tissue distribution, significantly expressed in the bone marrow, trachea, testis, thyroid and lung as well as in skin fibroblasts.

It is found in the cytoplasmic vesicle membrane. It catalyses the reaction cholesterol(in) + ATP + H2O = cholesterol(out) + ADP + phosphate + H(+). May mediate the cholesterol and gangliosides transport from the plasma membrane to intracellular vesicles in an ATP hydrolysis dependent manner, thus playing a role in their internalization by endocytic retrograde transport and may also participate in the endocytosis of synaptic vesicle in cortical neurons. The sequence is that of ATP-binding cassette sub-family A member 13 from Homo sapiens (Human).